A 32-amino-acid chain; its full sequence is Cyclotide glopa A (32 aa).

The cyclopeptide (Gly-Asn) cross-link spans 1–32 (GGSIPCIETCVWTGCFLVPGCSCKSDKKCYLN). 3 disulfide bridges follow: Cys-6/Cys-21, Cys-10/Cys-23, and Cys-15/Cys-29.

This is a cyclic peptide.

Its function is as follows. Probably participates in a plant defense mechanism. In Gloeospermum pauciflorum, this protein is Cyclotide glopa A.